The sequence spans 673 residues: DNA ligase (673 aa).

Residues 32-36, 81-82, and glutamate 113 contribute to the NAD(+) site; these read DAEYD and SL. The N6-AMP-lysine intermediate role is filled by lysine 115. The NAD(+) site is built by arginine 136, glutamate 173, lysine 290, and lysine 314. The Zn(2+) site is built by cysteine 408, cysteine 411, cysteine 426, and cysteine 432. In terms of domain architecture, BRCT spans 595–673; the sequence is EIDSPFAGKT…EAEMIRLLGA (79 aa).

This sequence belongs to the NAD-dependent DNA ligase family. LigA subfamily. Requires Mg(2+) as cofactor. Mn(2+) is required as a cofactor.

The enzyme catalyses NAD(+) + (deoxyribonucleotide)n-3'-hydroxyl + 5'-phospho-(deoxyribonucleotide)m = (deoxyribonucleotide)n+m + AMP + beta-nicotinamide D-nucleotide.. DNA ligase that catalyzes the formation of phosphodiester linkages between 5'-phosphoryl and 3'-hydroxyl groups in double-stranded DNA using NAD as a coenzyme and as the energy source for the reaction. It is essential for DNA replication and repair of damaged DNA. The protein is DNA ligase of Serratia proteamaculans (strain 568).